The primary structure comprises 266 residues: Protein crossbronx-like (266 aa).

The 164-residue stretch at 15–178 folds into the UBC core domain; that stretch reads KQGYHILAEY…VQEQAIASRN (164 aa).

This sequence belongs to the ubiquitin-conjugating enzyme family. FTS subfamily.

The sequence is that of Protein crossbronx-like from Drosophila erecta (Fruit fly).